A 426-amino-acid chain; its full sequence is Serine--tRNA ligase (426 aa).

Residue Thr233–Glu235 coordinates L-serine. Arg264–Glu266 contacts ATP. Glu287 provides a ligand contact to L-serine. Glu351–Ser354 contacts ATP. Ser387 contributes to the L-serine binding site.

Belongs to the class-II aminoacyl-tRNA synthetase family. Type-1 seryl-tRNA synthetase subfamily. In terms of assembly, homodimer. The tRNA molecule binds across the dimer.

The protein localises to the cytoplasm. It catalyses the reaction tRNA(Ser) + L-serine + ATP = L-seryl-tRNA(Ser) + AMP + diphosphate + H(+). It carries out the reaction tRNA(Sec) + L-serine + ATP = L-seryl-tRNA(Sec) + AMP + diphosphate + H(+). The protein operates within aminoacyl-tRNA biosynthesis; selenocysteinyl-tRNA(Sec) biosynthesis; L-seryl-tRNA(Sec) from L-serine and tRNA(Sec): step 1/1. Functionally, catalyzes the attachment of serine to tRNA(Ser). Is also able to aminoacylate tRNA(Sec) with serine, to form the misacylated tRNA L-seryl-tRNA(Sec), which will be further converted into selenocysteinyl-tRNA(Sec). The polypeptide is Serine--tRNA ligase (Clostridium tetani (strain Massachusetts / E88)).